The sequence spans 68 residues: uncharacterized protein (68 aa).

This is an uncharacterized protein from Escherichia coli (Bacteriophage T4).